Here is a 217-residue protein sequence, read N- to C-terminus: Octanoyltransferase (217 aa).

The 176-residue stretch at 32–207 (SESHDELWIV…TFSQLLGYQH (176 aa)) folds into the BPL/LPL catalytic domain. Substrate-binding positions include 71 to 78 (RGGQVTYH), 138 to 140 (SLG), and 151 to 153 (GLA). Catalysis depends on cysteine 169, which acts as the Acyl-thioester intermediate.

It belongs to the LipB family.

It localises to the cytoplasm. It catalyses the reaction octanoyl-[ACP] + L-lysyl-[protein] = N(6)-octanoyl-L-lysyl-[protein] + holo-[ACP] + H(+). It participates in protein modification; protein lipoylation via endogenous pathway; protein N(6)-(lipoyl)lysine from octanoyl-[acyl-carrier-protein]: step 1/2. Its function is as follows. Catalyzes the transfer of endogenously produced octanoic acid from octanoyl-acyl-carrier-protein onto the lipoyl domains of lipoate-dependent enzymes. Lipoyl-ACP can also act as a substrate although octanoyl-ACP is likely to be the physiological substrate. In Shewanella baltica (strain OS155 / ATCC BAA-1091), this protein is Octanoyltransferase.